A 343-amino-acid chain; its full sequence is Small ribosomal subunit biogenesis GTPase RsgA (343 aa).

A CP-type G domain is found at 116-275 (RGQLKPVAAN…LIDSPGIREF (160 aa)). Residues 163 to 166 (NKAD) and 217 to 225 (GQSGVGKSS) contribute to the GTP site. Zn(2+)-binding residues include Cys-299, Cys-304, His-306, and Cys-312.

Belongs to the TRAFAC class YlqF/YawG GTPase family. RsgA subfamily. Monomer. Associates with 30S ribosomal subunit, binds 16S rRNA. Zn(2+) is required as a cofactor.

It is found in the cytoplasm. In terms of biological role, one of several proteins that assist in the late maturation steps of the functional core of the 30S ribosomal subunit. Helps release RbfA from mature subunits. May play a role in the assembly of ribosomal proteins into the subunit. Circularly permuted GTPase that catalyzes slow GTP hydrolysis, GTPase activity is stimulated by the 30S ribosomal subunit. This Pseudomonas fluorescens (strain ATCC BAA-477 / NRRL B-23932 / Pf-5) protein is Small ribosomal subunit biogenesis GTPase RsgA.